A 546-amino-acid polypeptide reads, in one-letter code: Delta-1-pyrroline-5-carboxylate dehydrogenase (546 aa).

Residue 279–284 (KDISSN) participates in NAD(+) binding. The active-site Proton acceptor is E297. C331 serves as the catalytic Nucleophile.

Belongs to the aldehyde dehydrogenase family.

It localises to the cytoplasm. It carries out the reaction L-glutamate 5-semialdehyde + NAD(+) + H2O = L-glutamate + NADH + 2 H(+). It participates in amino-acid degradation; L-proline degradation into L-glutamate; L-glutamate from L-proline: step 2/2. This chain is Delta-1-pyrroline-5-carboxylate dehydrogenase (pruA), found in Agaricus bisporus (White button mushroom).